The primary structure comprises 347 residues: Phenylalanine--tRNA ligase alpha subunit (347 aa).

Position 265 (glutamate 265) interacts with Mg(2+).

The protein belongs to the class-II aminoacyl-tRNA synthetase family. Phe-tRNA synthetase alpha subunit type 1 subfamily. As to quaternary structure, tetramer of two alpha and two beta subunits. Requires Mg(2+) as cofactor.

The protein resides in the cytoplasm. It catalyses the reaction tRNA(Phe) + L-phenylalanine + ATP = L-phenylalanyl-tRNA(Phe) + AMP + diphosphate + H(+). The polypeptide is Phenylalanine--tRNA ligase alpha subunit (Mycolicibacterium paratuberculosis (strain ATCC BAA-968 / K-10) (Mycobacterium paratuberculosis)).